Reading from the N-terminus, the 107-residue chain is Universal stress protein B homolog (107 aa).

2 consecutive transmembrane segments (helical) span residues 6 to 26 and 86 to 106; these read IILF…LTAL and VREL…AAFL.

The protein belongs to the universal stress protein B family.

It localises to the cell inner membrane. This is Universal stress protein B homolog from Vibrio vulnificus (strain CMCP6).